A 278-amino-acid chain; its full sequence is Elongation factor Ts (278 aa).

The tract at residues 80–83 (TDFV) is involved in Mg(2+) ion dislocation from EF-Tu.

This sequence belongs to the EF-Ts family.

It localises to the cytoplasm. Functionally, associates with the EF-Tu.GDP complex and induces the exchange of GDP to GTP. It remains bound to the aminoacyl-tRNA.EF-Tu.GTP complex up to the GTP hydrolysis stage on the ribosome. This is Elongation factor Ts from Paenarthrobacter aurescens (strain TC1).